The primary structure comprises 152 residues: Interleukin-3 (152 aa).

The N-terminal stretch at Met1–Gln19 is a signal peptide. 2 N-linked (GlcNAc...) asparagine glycosylation sites follow: Asn34 and Asn89. A disulfide bridge links Cys35 with Cys103.

Belongs to the IL-3 family. As to quaternary structure, monomer. In terms of tissue distribution, activated T-cells, mast cells, natural killer cells.

The protein localises to the secreted. Its function is as follows. Granulocyte/macrophage colony-stimulating factors are cytokines that act in hematopoiesis by controlling the production, differentiation, and function of 2 related white cell populations of the blood, the granulocytes and the monocytes-macrophages. Functionally, this CSF induces granulocytes, macrophages, mast cells, stem cells, erythroid cells, eosinophils and megakaryocytes. This Pan troglodytes (Chimpanzee) protein is Interleukin-3 (IL3).